Reading from the N-terminus, the 952-residue chain is UvrABC system protein A (952 aa).

Position 38–45 (38–45 (GLSGSGKS)) interacts with ATP. The C4-type zinc finger occupies 259–286 (CDKCGFSISELEPRLFSFNSPLGSCSYC). 2 consecutive ABC transporter domains span residues 316-595 (FKNI…SNSI) and 615-944 (GNGK…QYLS). Position 647–654 (647–654 (GVSGSGKS)) interacts with ATP. The C4-type zinc finger occupies 746-772 (CDKCFGDGVIRIEMHFLPDVYVKCEVC).

The protein belongs to the ABC transporter superfamily. UvrA family. Forms a heterotetramer with UvrB during the search for lesions.

It is found in the cytoplasm. The UvrABC repair system catalyzes the recognition and processing of DNA lesions. UvrA is an ATPase and a DNA-binding protein. A damage recognition complex composed of 2 UvrA and 2 UvrB subunits scans DNA for abnormalities. When the presence of a lesion has been verified by UvrB, the UvrA molecules dissociate. This is UvrABC system protein A from Mycoplasma genitalium (strain ATCC 33530 / DSM 19775 / NCTC 10195 / G37) (Mycoplasmoides genitalium).